The following is a 336-amino-acid chain: Nuclear envelope-associated protein 1 (336 aa).

Residues 125–261 (CSMLKQQLDD…RRTDQDLKKK (137 aa)) adopt a coiled-coil conformation. Residues 240–261 (KTKELESQLEKQRRTDQDLKKK) carry the Bipartite nuclear localization signal motif. A helical transmembrane segment spans residues 313–330 (FWDNSGFKIVVSMSMLML).

As to quaternary structure, forms heteromers with NEAP2 and NEAP3. Interacts with SUN1; SUN2 and bZIP18.

The protein resides in the nucleus inner membrane. It localises to the nucleus. The protein localises to the nucleoplasm. The protein is Nuclear envelope-associated protein 1 of Arabidopsis thaliana (Mouse-ear cress).